Reading from the N-terminus, the 354-residue chain is MNGTEGPYFYIPMVNTTGIVRSPYEYPQYYLVNPAAYAALGAYMFFLILLGFPINFLTLYVTLEHKKLRTPLNYILLNLAVADLFMVFGGFTTTMYTSMHGYFVLGRLGCNLEGFFATLGGEIGLWSLVVLAIERWVVVCKPISNFRFGENHAIMGLAFTWIMACACAVPPLVGWSRYIPEGMQCSCGVDYYTRAEGFNNESFVVYMFTCHFCIPLTIIGFCYGRLLCAVKEAAAAQQESETTQRAEREVTRMVILMVVGFLVCWLPYASVAWYIFSNQGSQFGPLFMTIPAFFAKSSSVYNPMIYICMNKQFRHCMITTLCCGKNPFEEEEGASTTASKTEASSVSSSSVSPA.

The Extracellular segment spans residues 1 to 36 (MNGTEGPYFYIPMVNTTGIVRSPYEYPQYYLVNPAA). N-linked (GlcNAc...) asparagine glycosylation is found at Asn2 and Asn15. Residues 37-61 (YAALGAYMFFLILLGFPINFLTLYV) form a helical membrane-spanning segment. At 62–73 (TLEHKKLRTPLN) the chain is on the cytoplasmic side. The chain crosses the membrane as a helical span at residues 74–96 (YILLNLAVADLFMVFGGFTTTMY). Topologically, residues 97 to 110 (TSMHGYFVLGRLGC) are extracellular. An intrachain disulfide couples Cys110 to Cys187. Residues 111–133 (NLEGFFATLGGEIGLWSLVVLAI) traverse the membrane as a helical segment. Positions 134–136 (ERW) match the 'Ionic lock' involved in activated form stabilization motif. At 134-152 (ERWVVVCKPISNFRFGENH) the chain is on the cytoplasmic side. Residues 153–173 (AIMGLAFTWIMACACAVPPLV) traverse the membrane as a helical segment. Over 174-202 (GWSRYIPEGMQCSCGVDYYTRAEGFNNES) the chain is Extracellular. N-linked (GlcNAc...) asparagine glycosylation occurs at Asn200. Residues 203–224 (FVVYMFTCHFCIPLTIIGFCYG) form a helical membrane-spanning segment. The Cytoplasmic portion of the chain corresponds to 225–252 (RLLCAVKEAAAAQQESETTQRAEREVTR). The helical transmembrane segment at 253 to 274 (MVILMVVGFLVCWLPYASVAWY) threads the bilayer. The Extracellular segment spans residues 275–286 (IFSNQGSQFGPL). The chain crosses the membrane as a helical span at residues 287 to 308 (FMTIPAFFAKSSSVYNPMIYIC). N6-(retinylidene)lysine is present on Lys296. The Cytoplasmic segment spans residues 309–354 (MNKQFRHCMITTLCCGKNPFEEEEGASTTASKTEASSVSSSSVSPA). S-palmitoyl cysteine attachment occurs at residues Cys322 and Cys323. The disordered stretch occupies residues 333 to 354 (GASTTASKTEASSVSSSSVSPA). Residues 334 to 354 (ASTTASKTEASSVSSSSVSPA) show a composition bias toward low complexity.

It belongs to the G-protein coupled receptor 1 family. Opsin subfamily. In terms of processing, phosphorylated on some or all of the serine and threonine residues present in the C-terminal region. Contains one covalently linked retinal chromophore.

Its subcellular location is the membrane. The protein resides in the cell projection. The protein localises to the cilium. It is found in the photoreceptor outer segment. In terms of biological role, photoreceptor required for image-forming vision at low light intensity. While most salt water fish species use retinal as chromophore, most freshwater fish use 3-dehydroretinal, or a mixture of retinal and 3-dehydroretinal. Light-induced isomerization of 11-cis to all-trans retinal triggers a conformational change that activates signaling via G-proteins. Subsequent receptor phosphorylation mediates displacement of the bound G-protein alpha subunit by arrestin and terminates signaling. The polypeptide is Rhodopsin (rho) (Salaria pavo (Peacock blenny)).